Reading from the N-terminus, the 232-residue chain is Peroxisomal protein PEX21 (232 aa).

C5 is covalently cross-linked (Glycyl cysteine thioester (Cys-Gly) (interchain with G-Cter in ubiquitin)).

Belongs to the peroxin-21 family. As to quaternary structure, interacts with PEX7. Post-translationally, monoubiquitinated at Cys-5; acts as a signal for PEX21 extraction and is required for proper export from peroxisomes and recycling.

The protein resides in the cytoplasm. It localises to the cytosol. It is found in the peroxisome. Mediates peroxisomal import of proteins containing a C-terminal PTS2-type peroxisomal targeting signal via its interaction with PEX7. Interaction with PEX7 only takes place when PEX7 is associated with cargo proteins containing a PTS2 peroxisomal targeting signal. PEX7 along with PTS2-containing cargo proteins are then translocated through the PEX13-PEX14 docking complex together with PEX21. The chain is Peroxisomal protein PEX21 (PEX21) from Candida glabrata (strain ATCC 2001 / BCRC 20586 / JCM 3761 / NBRC 0622 / NRRL Y-65 / CBS 138) (Yeast).